The sequence spans 263 residues: Palmitoyltransferase ZDHHC22 (263 aa).

Residues 1-9 (MLALRLLNV) lie on the Cytoplasmic side of the membrane. The helical transmembrane segment at 10–30 (VAPAYFLCISLVTFVLQLFLF) threads the bilayer. Residues 31–48 (LPSMREDPTATPLFSPAV) are Lumenal-facing. Residues 49–69 (LHGALFLFLSANALGNYVLVI) form a helical membrane-spanning segment. Residues 70 to 125 (QNSPDDLGTCQGTMSQRPQCPPPSTHFCRVCSRVTLRHDHHCFFTGNCIGSRNMRN) are Cytoplasmic-facing. The DHHC domain maps to 91–131 (PPSTHFCRVCSRVTLRHDHHCFFTGNCIGSRNMRNFILFCL). Cys111 functions as the S-palmitoyl cysteine intermediate in the catalytic mechanism. 2 consecutive transmembrane segments (helical) span residues 126 to 146 (FILF…AGVA) and 147 to 167 (YISA…TLLP). Topologically, residues 168–182 (TSISQFFSGAVLGSD) are cytoplasmic. A helical membrane pass occupies residues 183-203 (MFVILMLYLWFAVGLACAGFC). At 204-263 (CHQLLLILRGQTRYQVRKGMAVRARPWRKNLQEVFGKRWLLGLLVPMFNVGTESSKQQDK) the chain is on the lumenal side.

It belongs to the DHHC palmitoyltransferase family. In terms of assembly, interacts with CNN3.

It localises to the endoplasmic reticulum membrane. It is found in the golgi apparatus membrane. It catalyses the reaction L-cysteinyl-[protein] + hexadecanoyl-CoA = S-hexadecanoyl-L-cysteinyl-[protein] + CoA. Palmitoyltransferase that could catalyze the addition of palmitate onto various protein substrates and be involved in a variety of cellular processes. Catalyzes the palmitoylation of KCNMA1, regulating localization of KCNMA1 to the plasma membrane. Might also mediate palmitoylation of CNN3. The chain is Palmitoyltransferase ZDHHC22 from Mus musculus (Mouse).